We begin with the raw amino-acid sequence, 384 residues long: Glucans biosynthesis protein C (384 aa).

Transmembrane regions (helical) follow at residues 17-37, 54-74, 91-111, 140-160, 173-193, 212-232, 240-260, 274-294, 311-331, and 338-358; these read AWLMLLGIPFHISLIYSTHSW, FIHAFRMQVFFVISGYFSYML, VGIPMLTAIPLLTLPQFILLQ, LWFLLVLVILTTVSIGIFTWF, AISLVRLSLIFFLLGMAYAAI, FIVMQTLFYVPFFILGALAFI, FTTPSRGCTLGAAVAFIAYLL, TESVITMVMGLWMVNVVFSLG, ASLFIYLVHHPLTLFFGAYIT, and LIGFLCGLIFVMGIALILYEI.

The protein belongs to the acyltransferase 3 family. OpgC subfamily.

It is found in the cell membrane. It functions in the pathway glycan metabolism; osmoregulated periplasmic glucan (OPG) biosynthesis. Functionally, necessary for the succinyl substitution of periplasmic glucans. Could catalyze the transfer of succinyl residues from the cytoplasmic side of the membrane to the nascent glucan backbones on the periplasmic side of the membrane. The sequence is that of Glucans biosynthesis protein C from Salmonella gallinarum (strain 287/91 / NCTC 13346).